The following is an 84-amino-acid chain: Large ribosomal subunit protein bL31B (84 aa).

This sequence belongs to the bacterial ribosomal protein bL31 family. Type B subfamily. As to quaternary structure, part of the 50S ribosomal subunit.

This is Large ribosomal subunit protein bL31B from Photorhabdus laumondii subsp. laumondii (strain DSM 15139 / CIP 105565 / TT01) (Photorhabdus luminescens subsp. laumondii).